The following is a 1207-amino-acid chain: DNA-directed RNA polymerase subunit beta' (1207 aa).

4 residues coordinate Zn(2+): Cys-60, Cys-62, Cys-75, and Cys-78. Asp-450, Asp-452, and Asp-454 together coordinate Mg(2+). Residues Cys-818, Cys-892, Cys-899, and Cys-902 each coordinate Zn(2+).

It belongs to the RNA polymerase beta' chain family. As to quaternary structure, the RNAP catalytic core consists of 2 alpha, 1 beta, 1 beta' and 1 omega subunit. When a sigma factor is associated with the core the holoenzyme is formed, which can initiate transcription. Mg(2+) serves as cofactor. Zn(2+) is required as a cofactor.

The enzyme catalyses RNA(n) + a ribonucleoside 5'-triphosphate = RNA(n+1) + diphosphate. Functionally, DNA-dependent RNA polymerase catalyzes the transcription of DNA into RNA using the four ribonucleoside triphosphates as substrates. This Lactococcus lactis subsp. cremoris (strain MG1363) protein is DNA-directed RNA polymerase subunit beta'.